The primary structure comprises 77 residues: Sec-independent protein translocase protein TatA (77 aa).

Residues 1–21 (MGGISIWQLLIIALIVVLLFG) form a helical membrane-spanning segment. 2 stretches are compositionally biased toward basic and acidic residues: residues 47-56 (EKKALEDKEA) and 65-77 (TEKK…KEQA). Positions 47-77 (EKKALEDKEAAAQTTQQATEKKPEADKKEQA) are disordered.

The protein belongs to the TatA/E family. In terms of assembly, the Tat system comprises two distinct complexes: a TatABC complex, containing multiple copies of TatA, TatB and TatC subunits, and a separate TatA complex, containing only TatA subunits. Substrates initially bind to the TatABC complex, which probably triggers association of the separate TatA complex to form the active translocon.

It localises to the cell inner membrane. Functionally, part of the twin-arginine translocation (Tat) system that transports large folded proteins containing a characteristic twin-arginine motif in their signal peptide across membranes. TatA could form the protein-conducting channel of the Tat system. The sequence is that of Sec-independent protein translocase protein TatA from Shewanella amazonensis (strain ATCC BAA-1098 / SB2B).